The chain runs to 367 residues: tRNA 2-selenouridine synthase (367 aa).

The 124-residue stretch at 12–135 (FLSGVAMLDV…MRGFLIETTD (124 aa)) folds into the Rhodanese domain. The active-site S-selanylcysteine intermediate is the Cys-95.

It belongs to the SelU family. In terms of assembly, monomer.

The catalysed reaction is 5-methylaminomethyl-2-thiouridine(34) in tRNA + selenophosphate + (2E)-geranyl diphosphate + H2O + H(+) = 5-methylaminomethyl-2-selenouridine(34) in tRNA + (2E)-thiogeraniol + phosphate + diphosphate. It catalyses the reaction 5-methylaminomethyl-2-thiouridine(34) in tRNA + (2E)-geranyl diphosphate = 5-methylaminomethyl-S-(2E)-geranyl-thiouridine(34) in tRNA + diphosphate. It carries out the reaction 5-methylaminomethyl-S-(2E)-geranyl-thiouridine(34) in tRNA + selenophosphate + H(+) = 5-methylaminomethyl-2-(Se-phospho)selenouridine(34) in tRNA + (2E)-thiogeraniol. The enzyme catalyses 5-methylaminomethyl-2-(Se-phospho)selenouridine(34) in tRNA + H2O = 5-methylaminomethyl-2-selenouridine(34) in tRNA + phosphate. In terms of biological role, involved in the post-transcriptional modification of the uridine at the wobble position (U34) of tRNA(Lys), tRNA(Glu) and tRNA(Gln). Catalyzes the conversion of 2-thiouridine (S2U-RNA) to 2-selenouridine (Se2U-RNA). Acts in a two-step process involving geranylation of 2-thiouridine (S2U) to S-geranyl-2-thiouridine (geS2U) and subsequent selenation of the latter derivative to 2-selenouridine (Se2U) in the tRNA chain. In Cupriavidus necator (strain ATCC 17699 / DSM 428 / KCTC 22496 / NCIMB 10442 / H16 / Stanier 337) (Ralstonia eutropha), this protein is tRNA 2-selenouridine synthase.